A 353-amino-acid chain; its full sequence is Quinolinate synthase (353 aa).

Positions 49 and 70 each coordinate iminosuccinate. Cys115 lines the [4Fe-4S] cluster pocket. Iminosuccinate is bound by residues Tyr141–Asn143 and Ser158. [4Fe-4S] cluster is bound at residue Cys202. Iminosuccinate is bound by residues His228–Glu230 and Thr245. Cys299 lines the [4Fe-4S] cluster pocket.

This sequence belongs to the quinolinate synthase family. Type 1 subfamily. Requires [4Fe-4S] cluster as cofactor.

The protein localises to the cytoplasm. It carries out the reaction iminosuccinate + dihydroxyacetone phosphate = quinolinate + phosphate + 2 H2O + H(+). The protein operates within cofactor biosynthesis; NAD(+) biosynthesis; quinolinate from iminoaspartate: step 1/1. Catalyzes the condensation of iminoaspartate with dihydroxyacetone phosphate to form quinolinate. This chain is Quinolinate synthase, found in Hahella chejuensis (strain KCTC 2396).